Consider the following 213-residue polypeptide: Orotate phosphoribosyltransferase (213 aa).

Residue Lys26 coordinates 5-phospho-alpha-D-ribose 1-diphosphate. Residue 34–35 (FF) coordinates orotate. 5-phospho-alpha-D-ribose 1-diphosphate is bound by residues 72 to 73 (YK), Arg99, Lys100, Lys103, His105, and 124 to 132 (DDVITAGTA). Orotate-binding residues include Thr128 and Arg156.

The protein belongs to the purine/pyrimidine phosphoribosyltransferase family. PyrE subfamily. In terms of assembly, homodimer. Mg(2+) is required as a cofactor.

It carries out the reaction orotidine 5'-phosphate + diphosphate = orotate + 5-phospho-alpha-D-ribose 1-diphosphate. It participates in pyrimidine metabolism; UMP biosynthesis via de novo pathway; UMP from orotate: step 1/2. Catalyzes the transfer of a ribosyl phosphate group from 5-phosphoribose 1-diphosphate to orotate, leading to the formation of orotidine monophosphate (OMP). This chain is Orotate phosphoribosyltransferase, found in Pseudomonas savastanoi pv. phaseolicola (strain 1448A / Race 6) (Pseudomonas syringae pv. phaseolicola (strain 1448A / Race 6)).